A 113-amino-acid polypeptide reads, in one-letter code: Probable 4-amino-4-deoxy-L-arabinose-phosphoundecaprenol flippase subunit ArnE (113 aa).

The next 3 membrane-spanning stretches (helical) occupy residues 37–57 (SALK…LFWL), 62–82 (ILPL…VTLA), and 91–111 (AGIK…LMSL). Positions 45–111 (AVILLAVGML…IMLGILLMSL (67 aa)) constitute an EamA domain.

The protein belongs to the ArnE family. In terms of assembly, heterodimer of ArnE and ArnF.

The protein resides in the cell inner membrane. The protein operates within bacterial outer membrane biogenesis; lipopolysaccharide biosynthesis. Its function is as follows. Translocates 4-amino-4-deoxy-L-arabinose-phosphoundecaprenol (alpha-L-Ara4N-phosphoundecaprenol) from the cytoplasmic to the periplasmic side of the inner membrane. This is Probable 4-amino-4-deoxy-L-arabinose-phosphoundecaprenol flippase subunit ArnE from Photorhabdus laumondii subsp. laumondii (strain DSM 15139 / CIP 105565 / TT01) (Photorhabdus luminescens subsp. laumondii).